Reading from the N-terminus, the 288-residue chain is Programmed cell death protein 1 (288 aa).

The N-terminal stretch at 1–24 is a signal peptide; the sequence is MQIPQAPWPVVWAVLQLGWRPGWF. Positions 25-34 are nivolumab binding; sequence LDSPDRPWNP. At 25 to 170 the chain is on the extracellular side; the sequence is LDSPDRPWNP…RPAGQFQTLV (146 aa). The region spanning 35 to 145 is the Ig-like V-type domain; it reads PTFSPALLVV…ESLRAELRVT (111 aa). Residues N49, N58, N74, and N116 are each glycosylated (N-linked (GlcNAc...) asparagine). A disulfide bridge connects residues C54 and C123. The interaction with CD274/PDCD1L1 stretch occupies residues 70–77; sequence MSPSNQTD. Positions 74-99 are pembrolizumab binding; sequence NQTDKLAAFPEDRSQPGQDCRFRVTQ. The helical transmembrane segment at 171–191 threads the bilayer; that stretch reads VGVVGGLLGSLVLLVWVLAVI. Residues 192–288 are Cytoplasmic-facing; sequence CSRAARGTIG…PEDGHCSWPL (97 aa). The ITIM motif signature appears at 221 to 226; the sequence is VDYGEL. Phosphotyrosine is present on Y223. K233 is covalently cross-linked (Glycyl lysine isopeptide (Lys-Gly) (interchain with G-Cter in ubiquitin)). The residue at position 234 (T234) is a Phosphothreonine; by MAPK3. The ITSM motif motif lies at 247 to 251; it reads EYATI. At Y248 the chain carries Phosphotyrosine. The interval 254-288 is disordered; that stretch reads PSGMGTSSPARRGSADGPRSAQPLRPEDGHCSWPL. Over residues 278–288 the composition is skewed to basic and acidic residues; it reads RPEDGHCSWPL.

Monomer. Interacts with CD274/PDCD1L1. Interacts with CD273/PDCD1LG2. Interacts with FBXO38; leading to ubiquitination and degradation of PDCD1 by the proteasome. Post-translationally, ubiquitinated at Lys-233 by the SCF(FBXO38) complex, leading to its proteasomal degradation. Ubiquitinated via 'Lys-48'-linked polyubiquitin chains. Deubiquitinated and thus stabilized by USP5. Tyrosine phosphorylated at Tyr-223 (within ITIM motif) and Tyr-248 (ITSM motif) upon ligand binding. Phosphorylation at Tyr-248 promotes the recruitment of the protein tyrosine phosphatase PTPN11/SHP-2 that mediates dephosphorylation of key TCR proximal signaling molecules, such as ZAP70, PRKCQ/PKCtheta and CD247/CD3zeta. Phosphorylation at Thr-234 promotes the recruitment of the deubiquitinase USP5. In terms of processing, N-glycosylation at Asn-58 contains at least two N-acetylglucosamine units and one fucose. N-glycosylation does not affect binding to nivolumab drug.

Its subcellular location is the cell membrane. Inhibited by pembrolizumab (also named MK-3475 or lambrolizumab), a monoclonal antibody that prevents the interaction with CD274/PDCD1L1. Inhibited by nivolumab (also named ONO-4538, BMS-936558 or Opdivo), a monoclonal antibody that prevents the interaction with CD274/PDCD1L1. The interaction with nivolumab is not dependent on glycosylation and depends on a loop at the N-terminus (N-terminal loop, corresponding to residues 25-34). Targeting the interaction between PDCD1 and CD274/PDCD1L1 with pembrolizumab and nivolumab antibodies has demonstrated great promise as a strategy for controlling and eradicating cancer. Pembrolizumab and nivolumab are used for treatment of patients with advanced melanoma. These antibodies are also effective against other cancers, such as non-small cell lung cancer, renal cell carcinoma, bladder cancer and Hodgkin's lymphoma. Its function is as follows. Inhibitory receptor on antigen activated T-cells that plays a critical role in induction and maintenance of immune tolerance to self. Delivers inhibitory signals upon binding to ligands CD274/PDCD1L1 and CD273/PDCD1LG2. Following T-cell receptor (TCR) engagement, PDCD1 associates with CD3-TCR in the immunological synapse and directly inhibits T-cell activation. Suppresses T-cell activation through the recruitment of PTPN11/SHP-2: following ligand-binding, PDCD1 is phosphorylated within the ITSM motif, leading to the recruitment of the protein tyrosine phosphatase PTPN11/SHP-2 that mediates dephosphorylation of key TCR proximal signaling molecules, such as ZAP70, PRKCQ/PKCtheta and CD247/CD3zeta. Functionally, the PDCD1-mediated inhibitory pathway is exploited by tumors to attenuate anti-tumor immunity and escape destruction by the immune system, thereby facilitating tumor survival. The interaction with CD274/PDCD1L1 inhibits cytotoxic T lymphocytes (CTLs) effector function. The blockage of the PDCD1-mediated pathway results in the reversal of the exhausted T-cell phenotype and the normalization of the anti-tumor response, providing a rationale for cancer immunotherapy. In Homo sapiens (Human), this protein is Programmed cell death protein 1.